The chain runs to 246 residues: Pyridoxine 5'-phosphate synthase (246 aa).

Asparagine 12 is a binding site for 3-amino-2-oxopropyl phosphate. Position 14–15 (14–15 (DH)) interacts with 1-deoxy-D-xylulose 5-phosphate. 3-amino-2-oxopropyl phosphate is bound at residue arginine 23. Residue histidine 48 is the Proton acceptor of the active site. Arginine 50 and histidine 55 together coordinate 1-deoxy-D-xylulose 5-phosphate. Glutamate 75 serves as the catalytic Proton acceptor. A 1-deoxy-D-xylulose 5-phosphate-binding site is contributed by threonine 105. Histidine 196 functions as the Proton donor in the catalytic mechanism. Residues glycine 197 and 218 to 219 (GH) each bind 3-amino-2-oxopropyl phosphate.

It belongs to the PNP synthase family. Homooctamer; tetramer of dimers.

The protein localises to the cytoplasm. It carries out the reaction 3-amino-2-oxopropyl phosphate + 1-deoxy-D-xylulose 5-phosphate = pyridoxine 5'-phosphate + phosphate + 2 H2O + H(+). Its pathway is cofactor biosynthesis; pyridoxine 5'-phosphate biosynthesis; pyridoxine 5'-phosphate from D-erythrose 4-phosphate: step 5/5. Catalyzes the complicated ring closure reaction between the two acyclic compounds 1-deoxy-D-xylulose-5-phosphate (DXP) and 3-amino-2-oxopropyl phosphate (1-amino-acetone-3-phosphate or AAP) to form pyridoxine 5'-phosphate (PNP) and inorganic phosphate. The chain is Pyridoxine 5'-phosphate synthase from Pseudomonas putida (strain ATCC 47054 / DSM 6125 / CFBP 8728 / NCIMB 11950 / KT2440).